The chain runs to 465 residues: Cysteine--tRNA ligase (465 aa).

Zn(2+) is bound at residue Cys29. The 'HIGH' region signature appears at 31-41; that stretch reads PTVYNYIHIGN. Cys209, His234, and Glu238 together coordinate Zn(2+). The short motif at 266 to 270 is the 'KMSKS' region element; it reads KMSKS. Lys269 is an ATP binding site. Ser270 is modified (phosphoserine).

It belongs to the class-I aminoacyl-tRNA synthetase family. In terms of assembly, monomer. Zn(2+) serves as cofactor.

It localises to the cytoplasm. It carries out the reaction tRNA(Cys) + L-cysteine + ATP = L-cysteinyl-tRNA(Cys) + AMP + diphosphate. The chain is Cysteine--tRNA ligase from Bacillus cereus (strain B4264).